The following is a 192-amino-acid chain: Pyridoxal 5'-phosphate synthase subunit PdxT (192 aa).

53-55 contributes to the L-glutamine binding site; sequence GES. Cys-82 serves as the catalytic Nucleophile. L-glutamine contacts are provided by residues Arg-109 and 137 to 138; that span reads IR. Residues His-173 and Glu-175 each act as charge relay system in the active site.

This sequence belongs to the glutaminase PdxT/SNO family. In terms of assembly, in the presence of PdxS, forms a dodecamer of heterodimers. Only shows activity in the heterodimer.

It carries out the reaction aldehydo-D-ribose 5-phosphate + D-glyceraldehyde 3-phosphate + L-glutamine = pyridoxal 5'-phosphate + L-glutamate + phosphate + 3 H2O + H(+). The catalysed reaction is L-glutamine + H2O = L-glutamate + NH4(+). It participates in cofactor biosynthesis; pyridoxal 5'-phosphate biosynthesis. Catalyzes the hydrolysis of glutamine to glutamate and ammonia as part of the biosynthesis of pyridoxal 5'-phosphate. The resulting ammonia molecule is channeled to the active site of PdxS. This Methanoculleus marisnigri (strain ATCC 35101 / DSM 1498 / JR1) protein is Pyridoxal 5'-phosphate synthase subunit PdxT.